Here is a 413-residue protein sequence, read N- to C-terminus: L-cysteine:1D-myo-inositol 2-amino-2-deoxy-alpha-D-glucopyranoside ligase (413 aa).

Cys-43 contributes to the Zn(2+) binding site. L-cysteinyl-5'-AMP-binding positions include 43–46 (CGIT), Thr-58, and 81–83 (NIT). The 'HIGH' region motif lies at 45 to 55 (ITPYDATHLGH). A 'ERGGDP' region motif is present at residues 187–192 (ERGGDP). Trp-227 is a binding site for L-cysteinyl-5'-AMP. Cys-231 lines the Zn(2+) pocket. Residue 249–251 (GND) participates in L-cysteinyl-5'-AMP binding. His-256 is a binding site for Zn(2+). Val-283 serves as a coordination point for L-cysteinyl-5'-AMP. A 'KMSKS' region motif is present at residues 289-293 (KMSKS).

It belongs to the class-I aminoacyl-tRNA synthetase family. MshC subfamily. In terms of assembly, monomer. It depends on Zn(2+) as a cofactor.

The catalysed reaction is 1D-myo-inositol 2-amino-2-deoxy-alpha-D-glucopyranoside + L-cysteine + ATP = 1D-myo-inositol 2-(L-cysteinylamino)-2-deoxy-alpha-D-glucopyranoside + AMP + diphosphate + H(+). Functionally, catalyzes the ATP-dependent condensation of GlcN-Ins and L-cysteine to form L-Cys-GlcN-Ins. The protein is L-cysteine:1D-myo-inositol 2-amino-2-deoxy-alpha-D-glucopyranoside ligase of Gordonia bronchialis (strain ATCC 25592 / DSM 43247 / BCRC 13721 / JCM 3198 / KCTC 3076 / NBRC 16047 / NCTC 10667) (Rhodococcus bronchialis).